We begin with the raw amino-acid sequence, 547 residues long: Rho GTPase-activating protein 36 (547 aa).

The N-terminal stretch at 1–40 is a signal peptide; sequence MGGCNPFLKAARTLCPRIMPPLLFLSAFIFLVNVLGGAPG. Positions 226 to 426 constitute a Rho-GAP domain; the sequence is MSLNPIAKQI…AMIDNWDILF (201 aa). A disordered region spans residues 493-547; the sequence is FDEGSSEEPAVPPGTAHSHDDEEGAGNPPIPEQDRPLLRVPREKQAKTGIGYFFP. Basic and acidic residues predominate over residues 524–538; it reads EQDRPLLRVPREKQA.

Functionally, GTPase activator for the Rho-type GTPases by converting them to an inactive GDP-bound state. In Ailuropoda melanoleuca (Giant panda), this protein is Rho GTPase-activating protein 36 (ARHGAP36).